The sequence spans 595 residues: Prolycopene isomerase, chloroplastic (595 aa).

The transit peptide at 1-56 (MDLCFQNPVKCGDRLFSALNTSTYYKLGTSNLGFNGPVLENRKKKKKLPRMVTVKS) directs the protein to the chloroplast. Position 57 is an N-acetylvaline (Val57).

Belongs to the carotenoid/retinoid oxidoreductase family. CrtISO subfamily. NAD(+) serves as cofactor. NADP(+) is required as a cofactor. Requires FAD as cofactor.

It is found in the plastid. The protein resides in the chloroplast membrane. It carries out the reaction 7,7',9,9'-tetra-cis-lycopene = all-trans-lycopene. It functions in the pathway carotenoid biosynthesis; lycopene biosynthesis. Carotene cis-trans-isomerase that converts 7,9,9'-tri-cis-neurosporene to 9'-cis-neurosporene and 7,9,9',7'-tetra-cis-lycopene (also known as prolycopene) into all-trans-lycopene. Isomerization requires redox-active components, suggesting that isomerization is achieved by a reversible redox reaction acting at specific double bonds. Isomerizes adjacent cis-double bonds at C7 and C9 pairwise into the trans-configuration, but is incapable of isomerizing single cis-double bonds at C9 and C9'. Carotenoid biosynthesis is partly required to form the prolamellar bodies of etioplasts. The sequence is that of Prolycopene isomerase, chloroplastic (CRTISO) from Arabidopsis thaliana (Mouse-ear cress).